The chain runs to 307 residues: Elongation factor Ts (307 aa).

The segment at 79-82 (TDFV) is involved in Mg(2+) ion dislocation from EF-Tu.

This sequence belongs to the EF-Ts family.

It localises to the cytoplasm. Its function is as follows. Associates with the EF-Tu.GDP complex and induces the exchange of GDP to GTP. It remains bound to the aminoacyl-tRNA.EF-Tu.GTP complex up to the GTP hydrolysis stage on the ribosome. This chain is Elongation factor Ts, found in Sinorhizobium medicae (strain WSM419) (Ensifer medicae).